A 574-amino-acid polypeptide reads, in one-letter code: Arginine--tRNA ligase (574 aa).

Residues 121–131 (PNIAKEMHIGH) carry the 'HIGH' region motif.

It belongs to the class-I aminoacyl-tRNA synthetase family. Monomer.

It localises to the cytoplasm. It carries out the reaction tRNA(Arg) + L-arginine + ATP = L-arginyl-tRNA(Arg) + AMP + diphosphate. This is Arginine--tRNA ligase from Buchnera aphidicola subsp. Acyrthosiphon pisum (strain 5A).